The following is a 628-amino-acid chain: Probable potassium transport system protein Kup (628 aa).

A run of 12 helical transmembrane segments spans residues 20-40 (ALLTLGALGVVFGDIGTSPLY), 63-83 (IISMVLWTITLIVTVKYVMLV), 110-130 (FVAVAGMLGAALFYGDVVITP), 151-171 (FILPISLAVLIAIFAIQPLGT), 178-198 (FGPIMLLWFVTLAGLGIPQII), 212-232 (ALGLIVAEPFQAFVLLGAVVL), 256-276 (WFCVVMPALILTYLGQGALVI), 296-316 (IPLVILATIATVIASQAVISG), 346-366 (IYMPLVNGLLFVSVMVVVLVF), 375-395 (AYGLAVTGTLVLVSVLYLIYV), 398-418 (TWWKTALFIVFIGIPEVLLFA), and 422-442 (TKIHDGGWLPLLTAAVLIVVM).

This sequence belongs to the HAK/KUP transporter (TC 2.A.72) family.

The protein localises to the cell membrane. The catalysed reaction is K(+)(in) + H(+)(in) = K(+)(out) + H(+)(out). In terms of biological role, transport of potassium into the cell. Likely operates as a K(+):H(+) symporter. This is Probable potassium transport system protein Kup from Corynebacterium glutamicum (strain R).